The sequence spans 291 residues: Tyrosine recombinase XerA (291 aa).

In terms of domain architecture, Core-binding (CB) spans 9–102 (PESGDLYNAF…AVRRFLKWIN (94 aa)). The Tyr recombinase domain maps to 115–279 (KEVKALDEIQ…VLDDLRNEYL (165 aa)). Active-site residues include R150, K175, H231, R234, and H257. The active-site O-(3'-phospho-DNA)-tyrosine intermediate is Y266.

It belongs to the 'phage' integrase family. XerA subfamily.

Its subcellular location is the cytoplasm. In terms of biological role, site-specific tyrosine recombinase, which acts by catalyzing the cutting and rejoining of the recombining DNA molecules. Probably involved in the resolution of chromosome dimers. Binds to the dif site. The polypeptide is Tyrosine recombinase XerA (Saccharolobus solfataricus (strain ATCC 35092 / DSM 1617 / JCM 11322 / P2) (Sulfolobus solfataricus)).